We begin with the raw amino-acid sequence, 314 residues long: Acetaldehyde dehydrogenase (314 aa).

Position 15 to 18 (15 to 18) interacts with NAD(+); the sequence is SGNI. The active-site Acyl-thioester intermediate is C133. NAD(+) is bound by residues 164–172 and N292; that span reads SAGPGTRAN.

This sequence belongs to the acetaldehyde dehydrogenase family.

It carries out the reaction acetaldehyde + NAD(+) + CoA = acetyl-CoA + NADH + H(+). This is Acetaldehyde dehydrogenase from Paraburkholderia phytofirmans (strain DSM 17436 / LMG 22146 / PsJN) (Burkholderia phytofirmans).